Here is a 299-residue protein sequence, read N- to C-terminus: ATP phosphoribosyltransferase (299 aa).

The protein belongs to the ATP phosphoribosyltransferase family. Long subfamily. Equilibrium between an active dimeric form, an inactive hexameric form and higher aggregates. Interconversion between the various forms is largely reversible and is influenced by the natural substrates and inhibitors of the enzyme. Mg(2+) serves as cofactor.

The protein localises to the cytoplasm. It carries out the reaction 1-(5-phospho-beta-D-ribosyl)-ATP + diphosphate = 5-phospho-alpha-D-ribose 1-diphosphate + ATP. It functions in the pathway amino-acid biosynthesis; L-histidine biosynthesis; L-histidine from 5-phospho-alpha-D-ribose 1-diphosphate: step 1/9. With respect to regulation, feedback inhibited by histidine. Its function is as follows. Catalyzes the condensation of ATP and 5-phosphoribose 1-diphosphate to form N'-(5'-phosphoribosyl)-ATP (PR-ATP). Has a crucial role in the pathway because the rate of histidine biosynthesis seems to be controlled primarily by regulation of HisG enzymatic activity. This is ATP phosphoribosyltransferase from Buchnera aphidicola subsp. Baizongia pistaciae (strain Bp).